Reading from the N-terminus, the 104-residue chain is PTS system lactose-specific EIIA component (104 aa).

In terms of domain architecture, PTS EIIA type-3 spans 4–102 (EEATLLGFEI…MKHLIELYKR (99 aa)). The active-site Tele-phosphohistidine intermediate is the His-78. Position 78 is a phosphohistidine; by HPr (His-78). Asp-81 is a binding site for Mg(2+).

Homotrimer. It depends on Mg(2+) as a cofactor.

It is found in the cytoplasm. The phosphoenolpyruvate-dependent sugar phosphotransferase system (sugar PTS), a major carbohydrate active transport system, catalyzes the phosphorylation of incoming sugar substrates concomitantly with their translocation across the cell membrane. The enzyme II LacEF PTS system is involved in lactose transport. The protein is PTS system lactose-specific EIIA component of Streptococcus mutans serotype c (strain ATCC 700610 / UA159).